A 202-amino-acid chain; its full sequence is MILKRLFDLTAAIFLLCCTSVIILFTIAVVRLKIGSPVFFKQVRPGLHGKPFTLYKFRTMTDERDSKGNLLPDEVRLTKTGRLIRKLSIDELPQLLNVLKGDLSLVGPRPLLMDYLPLYTEKQARRHEVKPGITGWAQINGRNAISWEKKFELDVWYVDNWSFFLDLKILCLTVRKVLVSEGIQQTNHVTAERFTGSGDVSS.

A helical transmembrane segment spans residues 10 to 30 (TAAIFLLCCTSVIILFTIAVV).

This sequence belongs to the bacterial sugar transferase family.

The protein resides in the cell membrane. Its function is as follows. May be involved in the production of the exopolysaccharide (EPS) component of the extracellular matrix during biofilm formation. EPS is responsible for the adhesion of chains of cells into bundles. This is an uncharacterized protein from Bacillus subtilis (strain 168).